The primary structure comprises 236 residues: Alpha-acetolactate decarboxylase (236 aa).

This sequence belongs to the alpha-acetolactate decarboxylase family.

The enzyme catalyses (2S)-2-acetolactate + H(+) = (R)-acetoin + CO2. The protein operates within polyol metabolism; (R,R)-butane-2,3-diol biosynthesis; (R,R)-butane-2,3-diol from pyruvate: step 2/3. In terms of biological role, converts acetolactate into acetoin. This chain is Alpha-acetolactate decarboxylase (aldB), found in Lactococcus lactis subsp. cremoris (strain MG1363).